Reading from the N-terminus, the 647-residue chain is Threonine--tRNA ligase (647 aa).

The TGS domain maps to 1-61 (MINITFPDGA…TEDGSIEIVT (61 aa)). The segment at 242–540 (DHRKLGKELD…LIENYKGAFP (299 aa)) is catalytic. Zn(2+) contacts are provided by C336, H387, and H517.

The protein belongs to the class-II aminoacyl-tRNA synthetase family. In terms of assembly, homodimer. Requires Zn(2+) as cofactor.

It is found in the cytoplasm. It carries out the reaction tRNA(Thr) + L-threonine + ATP = L-threonyl-tRNA(Thr) + AMP + diphosphate + H(+). Its function is as follows. Catalyzes the attachment of threonine to tRNA(Thr) in a two-step reaction: L-threonine is first activated by ATP to form Thr-AMP and then transferred to the acceptor end of tRNA(Thr). Also edits incorrectly charged L-seryl-tRNA(Thr). The chain is Threonine--tRNA ligase from Streptococcus pneumoniae (strain P1031).